We begin with the raw amino-acid sequence, 267 residues long: Regulatory protein RecX (267 aa).

The protein belongs to the RecX family.

The protein resides in the cytoplasm. Modulates RecA activity. The protein is Regulatory protein RecX of Staphylococcus carnosus (strain TM300).